We begin with the raw amino-acid sequence, 805 residues long: MEAEDDERAEAEAEARREKEAGNAAYRKLYLETAVRHYTRGALLDPRDISFLTNRAAAYLLMSKYKECVRDCDEAVEKGRELRADNKLVARALARKASALLKLAACAADYDPAIRALQQSLAEHYSEETLAKLGEAEEARKEIEERERLDQEAADHHRDRGNDFFKQKRYQEAAMHYTEAMKKNPKDPRVFSNRAQCHIYLGALPEGLEDADKCIALDPTFLKGYLRKAKVQLLMGNYEIALATYVEGLKCDPNNLEVLDGLRRCAACIKRANGGDSRAEDLREILGDLHLNDDLCNKLQKSMDEAAVLKKEASDERLKRIESERLARTLEDLYLSQVQQRKETEESLSRVQQEFEQLKIQQDEVTVELQRVNEQNENLLGQLSDSREHFEWLLSEHDQLLRERDNAVREVEELRQKRGQMLSVLVTAMHCEFSSSEVESATENFSNSLKIGEGGFGCVYKGILRNMTVAIKVLRPDSLQGQSQFEQEVSILSRVRHPHLVTLLGACSESSTLVYEFLPNGSLEDFLMCSDKRQTLTWQARIRIIAEICSALIFLHKNKPHPVVHGDLKPANILLGVNLVSKLSDFGISRLLIQSSTNNTTLYRTMHPVGTPLYMDPEFLSTGELTPQSDVYSFGIVVLRLLTGKPPVGIKNIVEDAMEKGDLNSVIDTSVGEWPHLHIEQLAYLALRCTELSRRCRPDLSGEVWAIVEAIRDAALSSPSSSRSAQDQNSPPSYFICPISQDIMDDPHIAADGFTYEAEAIRSWLCNGHDTSPMTNLLLEHEELIPNRALRSAIQEWLQQHSMSL.

TPR repeat units lie at residues 15 to 48, 49 to 82, 90 to 127, 129 to 153, 154 to 187, 189 to 221, and 222 to 255; these read ARRE…DPRD, ISFL…GREL, ARAL…HYSE, TLAK…DQEA, ADHH…NPKD, RVFS…DPTF, and LKGY…DPNN. The tract at residues 136–160 is disordered; it reads AEEARKEIEERERLDQEAADHHRDR. The stretch at 341–417 forms a coiled coil; sequence RKETEESLSR…VREVEELRQK (77 aa). The Protein kinase domain occupies 445–711; it reads FSNSLKIGEG…GEVWAIVEAI (267 aa). Residues 451–459 and Lys472 contribute to the ATP site; that span reads IGEGGFGCV. The Proton acceptor role is filled by Asp567. Residues 730–804 form the U-box domain; it reads SPPSYFICPI…QEWLQQHSMS (75 aa).

The protein belongs to the protein kinase superfamily. Ser/Thr protein kinase family. In terms of assembly, interacts with MODD.

It carries out the reaction L-seryl-[protein] + ATP = O-phospho-L-seryl-[protein] + ADP + H(+). The enzyme catalyses L-threonyl-[protein] + ATP = O-phospho-L-threonyl-[protein] + ADP + H(+). It catalyses the reaction S-ubiquitinyl-[E2 ubiquitin-conjugating enzyme]-L-cysteine + [acceptor protein]-L-lysine = [E2 ubiquitin-conjugating enzyme]-L-cysteine + N(6)-ubiquitinyl-[acceptor protein]-L-lysine.. It participates in protein modification; protein ubiquitination. Functions as an E3 ubiquitin ligase. Is recruited by MODD to promote ubiquitination of BZIP46, a positive regulator of abscisic acid (ABA) signaling and drought stress tolerance. This Oryza sativa subsp. japonica (Rice) protein is U-box domain-containing protein 70.